The chain runs to 194 residues: Thymidine kinase (194 aa).

ATP contacts are provided by residues 15–22 and 88–91; these read GCMFSGKT and DELH. Glutamate 89 (proton acceptor) is an active-site residue. Zn(2+) is bound by residues cysteine 148, cysteine 151, cysteine 186, and cysteine 189.

This sequence belongs to the thymidine kinase family. In terms of assembly, homotetramer.

It localises to the cytoplasm. The catalysed reaction is thymidine + ATP = dTMP + ADP + H(+). The sequence is that of Thymidine kinase from Roseiflexus castenholzii (strain DSM 13941 / HLO8).